An 85-amino-acid chain; its full sequence is UPF0181 protein YPTS_1774 (85 aa).

Residues 57-72 (DHDFDEHTESDYRRDD) show a composition bias toward basic and acidic residues. Positions 57–85 (DHDFDEHTESDYRRDDEPDADDIEDLYEG) are disordered. Over residues 73 to 85 (EPDADDIEDLYEG) the composition is skewed to acidic residues.

This sequence belongs to the UPF0181 family.

This is UPF0181 protein YPTS_1774 from Yersinia pseudotuberculosis serotype IB (strain PB1/+).